The following is a 607-amino-acid chain: Synaptotagmin-like protein 3 (607 aa).

A RabBD domain is found at 4-123 (EVDLESFKEL…IKTGEWFFEE (120 aa)). Positions 221–279 (VGHTERRSQSDTAVNVTSRKASTPDILKAFHQEDPKHPPDPVLKQDTPPSSPTHSAVFS) are disordered. Residues 230 to 241 (SDTAVNVTSRKA) are compositionally biased toward polar residues. Positions 248-259 (KAFHQEDPKHPP) are enriched in basic and acidic residues. C2 domains lie at 305-430 (VTGE…ARWY) and 458-590 (LPAG…LQWH).

Monomer. Binds NRXN1. Binds RAB27A that has been activated by GTP-binding via its N-terminus. In terms of tissue distribution, highly expressed in spleen and lung. Detected at lower levels in heart and testis.

It is found in the endomembrane system. May act as Rab effector protein and play a role in vesicle trafficking. Binds phospholipids in the presence of calcium ions. The sequence is that of Synaptotagmin-like protein 3 (Sytl3) from Mus musculus (Mouse).